A 242-amino-acid chain; its full sequence is 6-carboxyhexanoate--CoA ligase (242 aa).

The protein belongs to the BioW family. As to quaternary structure, homodimer. The cofactor is Mg(2+).

It carries out the reaction heptanedioate + ATP + CoA = 6-carboxyhexanoyl-CoA + AMP + diphosphate. It participates in metabolic intermediate metabolism; pimeloyl-CoA biosynthesis; pimeloyl-CoA from pimelate: step 1/1. Its function is as follows. Catalyzes the transformation of pimelate into pimeloyl-CoA with concomitant hydrolysis of ATP to AMP. This is 6-carboxyhexanoate--CoA ligase from Veillonella parvula (strain ATCC 10790 / DSM 2008 / CCUG 5123 / JCM 12972 / NCTC 11810 / Te3) (Veillonella alcalescens).